Consider the following 459-residue polypeptide: Ribosomal protein uS12 methylthiotransferase RimO (459 aa).

The MTTase N-terminal domain occupies 11–126 (PKVGMVSLGC…VMQAVHSHLP (116 aa)). 6 residues coordinate [4Fe-4S] cluster: C20, C56, C85, C157, C161, and C164. Residues 143–388 (LTPRHYAYLK…MEVAEEVSAA (246 aa)) form the Radical SAM core domain. In terms of domain architecture, TRAM spans 391–459 (ARKVGKTLKV…ADGHDLWGEV (69 aa)).

Belongs to the methylthiotransferase family. RimO subfamily. [4Fe-4S] cluster serves as cofactor.

It is found in the cytoplasm. It carries out the reaction L-aspartate(89)-[ribosomal protein uS12]-hydrogen + (sulfur carrier)-SH + AH2 + 2 S-adenosyl-L-methionine = 3-methylsulfanyl-L-aspartate(89)-[ribosomal protein uS12]-hydrogen + (sulfur carrier)-H + 5'-deoxyadenosine + L-methionine + A + S-adenosyl-L-homocysteine + 2 H(+). Functionally, catalyzes the methylthiolation of an aspartic acid residue of ribosomal protein uS12. The protein is Ribosomal protein uS12 methylthiotransferase RimO of Burkholderia pseudomallei (strain K96243).